Consider the following 169-residue polypeptide: Allophycocyanin subunit beta-18 (169 aa).

Asn72 is subject to N4-methylasparagine. Cys82 contributes to the (2R,3E)-phycocyanobilin binding site.

It belongs to the phycobiliprotein family. In terms of assembly, heterodimer of ApcE and this beta chain. Post-translationally, contains one covalently linked bilin chromophore. The chromophore is added by phycocyanobilin lyase CpcUS.

It localises to the cellular thylakoid membrane. In terms of biological role, a variant beta-allophycocyanin (AP) which forms a complex with ApcE, a phycobilisome terminal emitter that influences energy transfer to photosystem II. The polypeptide is Allophycocyanin subunit beta-18 (apcF) (Picosynechococcus sp. (strain ATCC 27264 / PCC 7002 / PR-6) (Agmenellum quadruplicatum)).